A 310-amino-acid chain; its full sequence is Olfactory receptor 5W2 (310 aa).

Over methionine 1–valine 25 the chain is Extracellular. N-linked (GlcNAc...) asparagine glycosylation occurs at asparagine 5. The helical transmembrane segment at threonine 26–isoleucine 46 threads the bilayer. Residues valine 47–glutamine 54 lie on the Cytoplasmic side of the membrane. A helical transmembrane segment spans residues leucine 55–threonine 75. Topologically, residues alanine 76–leucine 99 are extracellular. The helical transmembrane segment at glutamine 100–phenylalanine 120 threads the bilayer. The Cytoplasmic segment spans residues aspartate 121–arginine 139. The helical transmembrane segment at valine 140 to methionine 160 threads the bilayer. At threonine 161 to glutamate 196 the chain is on the extracellular side. Residues leucine 197–serine 217 traverse the membrane as a helical segment. Residues tyrosine 218–alanine 237 are Cytoplasmic-facing. The chain crosses the membrane as a helical span at residues leucine 238–methionine 258. Residues tyrosine 259–aspartate 271 lie on the Extracellular side of the membrane. A helical transmembrane segment spans residues lysine 272–leucine 292. The Cytoplasmic segment spans residues arginine 293–phenylalanine 310.

This sequence belongs to the G-protein coupled receptor 1 family.

The protein resides in the cell membrane. In terms of biological role, odorant receptor. This chain is Olfactory receptor 5W2 (OR5W2), found in Homo sapiens (Human).